The chain runs to 61 residues: MDFLKKSLFLVLFLGLVSISLCDEEKRQDDDEASEREEKKEIHEEGNQEERRDRPPSWIPK.

Residues 1-22 form the signal peptide; the sequence is MDFLKKSLFLVLFLGLVSISLC. Residues 23-53 constitute a propeptide that is removed on maturation; the sequence is DEEKRQDDDEASEREEKKEIHEEGNQEERRD. The tract at residues 25-61 is disordered; it reads EKRQDDDEASEREEKKEIHEEGNQEERRDRPPSWIPK. Basic and acidic residues predominate over residues 36-55; sequence REEKKEIHEEGNQEERRDRP. The residue at position 56 (Pro-56) is a 4-hydroxyproline; partial.

The protein belongs to the frog skin active peptide (FSAP) family. Tryptophillin subfamily. Expressed by the skin glands.

The protein resides in the secreted. The chain is Tryptophyllin-T1 from Pithecopus azureus (Orange-legged monkey tree frog).